Consider the following 61-residue polypeptide: Small ribosomal subunit protein uS14B (61 aa).

Cys24, Cys27, Cys40, and Cys43 together coordinate Zn(2+).

Belongs to the universal ribosomal protein uS14 family. Zinc-binding uS14 subfamily. Part of the 30S ribosomal subunit. Contacts proteins S3 and S10. Requires Zn(2+) as cofactor.

Its function is as follows. Binds 16S rRNA, required for the assembly of 30S particles and may also be responsible for determining the conformation of the 16S rRNA at the A site. This is Small ribosomal subunit protein uS14B from Limosilactobacillus reuteri (strain DSM 20016) (Lactobacillus reuteri).